Reading from the N-terminus, the 350-residue chain is Galactokinase (350 aa).

14–17 (EHTD) contributes to the substrate binding site. ATP-binding positions include Ser-46 and 96–102 (GAGLSSS). Residues Ser-102 and Glu-134 each coordinate Mg(2+). The active-site Proton acceptor is the Asp-146. Tyr-196 contributes to the substrate binding site.

Belongs to the GHMP kinase family. GalK subfamily.

The protein resides in the cytoplasm. The enzyme catalyses alpha-D-galactose + ATP = alpha-D-galactose 1-phosphate + ADP + H(+). It participates in carbohydrate metabolism; galactose metabolism. Catalyzes the transfer of the gamma-phosphate of ATP to D-galactose to form alpha-D-galactose-1-phosphate (Gal-1-P). The chain is Galactokinase from Thermotoga neapolitana (strain ATCC 49049 / DSM 4359 / NBRC 107923 / NS-E).